The chain runs to 477 residues: Sulfate adenylyltransferase subunit 1 (477 aa).

The tr-type G domain occupies Lys22–Leu239. The G1 stretch occupies residues Gly31–Ser38. Residue Gly31–Ser38 participates in GTP binding. The interval Gly89–Asp93 is G2. Positions Asp110–Gly113 are G3. GTP-binding positions include Asp110–His114 and Asn165–Asp168. Positions Asn165–Asp168 are G4. The interval Ser202–Leu204 is G5.

It belongs to the TRAFAC class translation factor GTPase superfamily. Classic translation factor GTPase family. CysN/NodQ subfamily. Heterodimer composed of CysD, the smaller subunit, and CysN.

The catalysed reaction is sulfate + ATP + H(+) = adenosine 5'-phosphosulfate + diphosphate. The protein operates within sulfur metabolism; hydrogen sulfide biosynthesis; sulfite from sulfate: step 1/3. Its function is as follows. With CysD forms the ATP sulfurylase (ATPS) that catalyzes the adenylation of sulfate producing adenosine 5'-phosphosulfate (APS) and diphosphate, the first enzymatic step in sulfur assimilation pathway. APS synthesis involves the formation of a high-energy phosphoric-sulfuric acid anhydride bond driven by GTP hydrolysis by CysN coupled to ATP hydrolysis by CysD. This chain is Sulfate adenylyltransferase subunit 1, found in Chromobacterium violaceum (strain ATCC 12472 / DSM 30191 / JCM 1249 / CCUG 213 / NBRC 12614 / NCIMB 9131 / NCTC 9757 / MK).